Consider the following 233-residue polypeptide: Sugar fermentation stimulation protein homolog (233 aa).

It belongs to the SfsA family.

This Chelativorans sp. (strain BNC1) protein is Sugar fermentation stimulation protein homolog.